Reading from the N-terminus, the 578-residue chain is Hemolysin 4 (578 aa).

Residues 289–322 (KDGPKASWRRRPSSASSVTMPTTPRIIGSNARPE) are disordered. Residues 448-539 (RPVNLQLGGF…LSNLSAHQLL (92 aa)) enclose the Ricin B-type lectin domain.

This sequence belongs to the HlyA hemolysin family.

Its function is as follows. Bacterial hemolysins are exotoxins that attack blood cell membranes and cause cell rupture by mechanisms not clearly defined. This chain is Hemolysin 4 (ash4), found in Aeromonas salmonicida.